The chain runs to 219 residues: Large ribosomal subunit protein bL25 (219 aa).

The segment at 188-219 is disordered; the sequence is TVAAPADTAVQPESSSTKGKKDEDGALAKDKK. The segment covering 206–219 has biased composition (basic and acidic residues); the sequence is GKKDEDGALAKDKK.

Belongs to the bacterial ribosomal protein bL25 family. CTC subfamily. As to quaternary structure, part of the 50S ribosomal subunit; part of the 5S rRNA/L5/L18/L25 subcomplex. Contacts the 5S rRNA. Binds to the 5S rRNA independently of L5 and L18.

Functionally, this is one of the proteins that binds to the 5S RNA in the ribosome where it forms part of the central protuberance. The chain is Large ribosomal subunit protein bL25 from Elusimicrobium minutum (strain Pei191).